A 64-amino-acid chain; its full sequence is MPKMKTNRGAAKRFKLKKNLIKRGSAFKSHILTKKSAKRKAGLNEPKYVNDANLDSIKKLLCMA.

It belongs to the bacterial ribosomal protein bL35 family.

This chain is Large ribosomal subunit protein bL35, found in Wolinella succinogenes (strain ATCC 29543 / DSM 1740 / CCUG 13145 / JCM 31913 / LMG 7466 / NCTC 11488 / FDC 602W) (Vibrio succinogenes).